The following is a 291-amino-acid chain: MTNKITERITGHTELIGLIATPIRHSLSPTMHNEAFAKLGLDYVYLAFEVGDKELKDVVQGFRAMNLRGWNVSMPNKTNIHKYLDKLSPAAELVGAVNTVVNDDGVLTGHITDGTGYMRALKEAGHDIIGKKMTICGAGGAATAICIQAALDGVKEISIFNRKDDFYANAEKTVEKINTKTNCKAQLFDMEDHEQLRKEIAESVIFTNATGVGMKPFEGETLLPSADMLRPELIVSDVVYKPTKTRLLEIAEEQGCQTLNGLGMMLWQGAKAFEIWTHKEMPVDYIKEILF.

Shikimate contacts are provided by residues 26-28 and Ser-73; that span reads SLS. The active-site Proton acceptor is the Lys-77. 2 residues coordinate shikimate: Asn-98 and Asp-113. Residues 137–141 and Val-238 each bind NADP(+); that span reads GAGGA. Residue Tyr-240 coordinates shikimate. Gly-261 provides a ligand contact to NADP(+).

It belongs to the shikimate dehydrogenase family. In terms of assembly, homodimer.

It carries out the reaction shikimate + NADP(+) = 3-dehydroshikimate + NADPH + H(+). It participates in metabolic intermediate biosynthesis; chorismate biosynthesis; chorismate from D-erythrose 4-phosphate and phosphoenolpyruvate: step 4/7. Its function is as follows. Involved in the biosynthesis of the chorismate, which leads to the biosynthesis of aromatic amino acids. Catalyzes the reversible NADPH linked reduction of 3-dehydroshikimate (DHSA) to yield shikimate (SA). The sequence is that of Shikimate dehydrogenase (NADP(+)) from Listeria innocua serovar 6a (strain ATCC BAA-680 / CLIP 11262).